Consider the following 450-residue polypeptide: TATA box-binding protein-associated factor RNA polymerase I subunit A (450 aa).

As to quaternary structure, component of the transcription factor SL1/TIF-IB complex, composed of TBP and at least TAF1A, TAF1B, TAF1C and TAF1D. In the complex interacts directly with TBP, TAF1A and TAF1B. Interaction of the SL1/TIF-IB subunits with TBP excludes interaction of TBP with the transcription factor IID (TFIID) subunits. Interacts with UBFT. Interacts with CEBPA (isoform 1 and isoform 4). Part of Pol I pre-initiation complex (PIC), in which Pol I core assembles with RRN3 and promoter-bound UTBF and SL1/TIF-IB complex.

Its subcellular location is the nucleus. It is found in the nucleolus. Functionally, component of the transcription factor SL1/TIF-IB complex, which is involved in the assembly of the PIC (pre-initiation complex) during RNA polymerase I-dependent transcription. The rate of PIC formation probably is primarily dependent on the rate of association of SL1/TIF-IB with the rDNA promoter. SL1/TIF-IB is involved in stabilization of nucleolar transcription factor 1/UBTF on rDNA. Formation of SL1/TIF-IB excludes the association of TBP with TFIID subunits. This Homo sapiens (Human) protein is TATA box-binding protein-associated factor RNA polymerase I subunit A (TAF1A).